The chain runs to 432 residues: Adenylosuccinate synthetase (432 aa).

GTP is bound by residues 12-18 and 40-42; these read GDEGKGK and GHT. Aspartate 13 serves as the catalytic Proton acceptor. Mg(2+)-binding residues include aspartate 13 and glycine 40. IMP is bound by residues 13 to 16, 38 to 41, threonine 130, arginine 144, glutamine 225, threonine 240, and arginine 304; these read DEGK and NAGH. Histidine 41 functions as the Proton donor in the catalytic mechanism. A substrate-binding site is contributed by 300–306; that stretch reads ATTGRPR. Residues arginine 306, 332–334, and 414–416 each bind GTP; these read KLD and SVG.

Belongs to the adenylosuccinate synthetase family. Homodimer. Mg(2+) serves as cofactor.

The protein resides in the cytoplasm. The enzyme catalyses IMP + L-aspartate + GTP = N(6)-(1,2-dicarboxyethyl)-AMP + GDP + phosphate + 2 H(+). It participates in purine metabolism; AMP biosynthesis via de novo pathway; AMP from IMP: step 1/2. Its function is as follows. Plays an important role in the de novo pathway of purine nucleotide biosynthesis. Catalyzes the first committed step in the biosynthesis of AMP from IMP. The polypeptide is Adenylosuccinate synthetase (Anaeromyxobacter dehalogenans (strain 2CP-C)).